Reading from the N-terminus, the 213-residue chain is MTENLHSRKMVQPKKFRGVRQRHWGSWVSEIRHPLLKRRVWLGTFETAEEAARAYDEAAVLMSGRNAKTNFPIQRSSTGEPTPAAGRDARSNFSSGSSTTNLSQILSAKLRKCCKAPSPSLTCLRLDPEKSHIGVWQKRAGARADSNWVMTVELNKDAASTDAASQSTSATTAPPATPMDEEERIALQMIEELLSSSSPASPSNGDDQGRFII.

Positions 15–72 (KFRGVRQRHWGSWVSEIRHPLLKRRVWLGTFETAEEAARAYDEAAVLMSGRNAKTNFP) form a DNA-binding region, AP2/ERF. The segment covering 70–80 (NFPIQRSSTGE) has biased composition (polar residues). 2 disordered regions span residues 70–99 (NFPI…GSST) and 159–213 (ASTD…RFII). Over residues 159–174 (ASTDAASQSTSATTAP) the composition is skewed to low complexity.

Belongs to the AP2/ERF transcription factor family. ERF subfamily. Mostly expressed in roots, stems and anthers, and, to a lower extent, in leaves, seeds and silks.

The protein resides in the nucleus. Its function is as follows. Promotes cuticle formation by inducing the expression of enzymes involved in wax biosynthesis, particularly promoting very-long-chain waxes formation. Confers drought resistance. Acts as a transcriptional activator binding directly to promoter regions of CER2, CER3.2 and KCS1, wax biosynthesis-related genes. Binds to the GCC-box pathogenesis-related promoter element. May be involved in the regulation of gene expression by stress factors and by components of stress signal transduction pathways. In Zea mays (Maize), this protein is Ethylene-responsive transcription factor WIN1.